A 195-amino-acid chain; its full sequence is Granulocyte colony-stimulating factor (195 aa).

An N-terminal signal peptide occupies residues 1 to 21 (MKLMALQLLLWHIALWMVPEA). Cystine bridges form between Cys-57/Cys-63 and Cys-85/Cys-95. A glycan (O-linked (GalNAc...) threonine) is linked at Thr-154.

It belongs to the IL-6 superfamily. In terms of assembly, monomer. O-glycosylated.

It localises to the secreted. Its function is as follows. Granulocyte/macrophage colony-stimulating factors are cytokines that act in hematopoiesis by controlling the production, differentiation, and function of 2 related white cell populations of the blood, the granulocytes and the monocytes-macrophages. This CSF induces granulocytes. The polypeptide is Granulocyte colony-stimulating factor (CSF3) (Sus scrofa (Pig)).